We begin with the raw amino-acid sequence, 244 residues long: Proteasome subunit alpha 2 (244 aa).

Belongs to the peptidase T1A family. In terms of assembly, the 20S proteasome core is composed of 14 alpha and 14 beta subunits that assemble into four stacked heptameric rings, resulting in a barrel-shaped structure. The two inner rings, each composed of seven catalytic beta subunits, are sandwiched by two outer rings, each composed of seven alpha subunits. The catalytic chamber with the active sites is on the inside of the barrel. Has a gated structure, the ends of the cylinder being occluded by the N-termini of the alpha-subunits. Is capped at one or both ends by the proteasome regulatory ATPase, PAN.

The protein localises to the cytoplasm. With respect to regulation, the formation of the proteasomal ATPase PAN-20S proteasome complex, via the docking of the C-termini of PAN into the intersubunit pockets in the alpha-rings, triggers opening of the gate for substrate entry. Interconversion between the open-gate and close-gate conformations leads to a dynamic regulation of the 20S proteasome proteolysis activity. Its function is as follows. Component of the proteasome core, a large protease complex with broad specificity involved in protein degradation. This is Proteasome subunit alpha 2 from Haloarcula marismortui (strain ATCC 43049 / DSM 3752 / JCM 8966 / VKM B-1809) (Halobacterium marismortui).